Reading from the N-terminus, the 123-residue chain is Putative C-type lectin protein FPV003/FPV258 (123 aa).

The C-type lectin domain occupies 21–122 (CRGPYTSYNN…CNATYGFVCI (102 aa)).

The sequence is that of Putative C-type lectin protein FPV003/FPV258 from Fowlpox virus (strain NVSL) (FPV).